Here is a 176-residue protein sequence, read N- to C-terminus: Large ribosomal subunit protein uL15 (176 aa).

A compositionally biased stretch (basic and acidic residues) spans 1 to 13 (MKLNDLRDNEGAR). 2 disordered regions span residues 1 to 48 (MKLN…AIKG) and 151 to 176 (IPAAQPEHEKKAARSEANKKAKAKAE). Over residues 21-35 (RGIGSGKGKTGGRGQ) the composition is skewed to gly residues. Positions 156–176 (PEHEKKAARSEANKKAKAKAE) are enriched in basic and acidic residues.

Belongs to the universal ribosomal protein uL15 family. As to quaternary structure, part of the 50S ribosomal subunit.

In terms of biological role, binds to the 23S rRNA. This is Large ribosomal subunit protein uL15 from Erythrobacter litoralis (strain HTCC2594).